Here is a 208-residue protein sequence, read N- to C-terminus: Thymidylate kinase (208 aa).

Residue 10 to 17 (GPEGSGKT) coordinates ATP.

It belongs to the thymidylate kinase family.

It carries out the reaction dTMP + ATP = dTDP + ADP. Phosphorylation of dTMP to form dTDP in both de novo and salvage pathways of dTTP synthesis. The protein is Thymidylate kinase of Bacillus anthracis.